The primary structure comprises 1279 residues: Photoreceptor cilium actin regulator (1279 aa).

G2 carries the N-myristoyl glycine lipid modification. C3 is lipidated: S-palmitoyl cysteine. Disordered stretches follow at residues 101 to 168, 380 to 598, 802 to 821, 860 to 1107, and 1127 to 1279; these read NKPQ…KGRV, AAQV…SHVE, EVSE…ENLP, ASHP…TTAK, and KSSS…KEIS. Positions 126-168 are enriched in basic and acidic residues; the sequence is FSGKESKENTPQETSKGNRESVCHQPDSQDHCRQSATESKGRV. Residues 477–491 are compositionally biased toward acidic residues; that stretch reads SEEEDCSPEEEDELS. 2 stretches are compositionally biased toward basic and acidic residues: residues 535–547 and 580–598; these read LKMK…RIKF and GPER…SHVE. Residues 804 to 818 are compositionally biased toward acidic residues; sequence SESEDISGDVEEDLE. 3 stretches are compositionally biased toward polar residues: residues 886–901, 913–925, and 955–965; these read GSGS…SGST, DLNS…PSSE, and TNPTPGQSRTL. Over residues 972-990 the composition is skewed to basic and acidic residues; that stretch reads FSRDPHSSEASRKGPERSL. The segment covering 1047–1062 has biased composition (polar residues); the sequence is RKTTSPPCQHPQSNPA. Positions 1076–1090 are enriched in low complexity; the sequence is PSSASCSSPSVSPSR. The span at 1091–1100 shows a compositional bias: basic and acidic residues; sequence GSKDSIHSED. Residues 1226 to 1241 are compositionally biased toward polar residues; it reads WNNSRVPELQGSSTKR. Basic and acidic residues predominate over residues 1259-1279; it reads RMNRGQDRPQPESQPQHKEIS.

As to expression, specifically expressed in retina.

Its subcellular location is the cell projection. It is found in the cilium. The protein resides in the photoreceptor outer segment. The protein localises to the photoreceptor inner segment. In terms of biological role, plays an essential role for normal photoreceptor cell maintenance and vision. The polypeptide is Photoreceptor cilium actin regulator (Mus musculus (Mouse)).